The following is a 581-amino-acid chain: Zinc finger protein 674 (581 aa).

Residues 8–79 form the KRAB domain; sequence LTFKDVFVDF…DGGTPVRTCA (72 aa). 4 C2H2-type zinc fingers span residues 224 to 246, 252 to 274, 280 to 302, and 308 to 330; these read YKCTECGKVFIQKANLVVHQRTH, YECCECAKAFSQKSTLIAHQRTH, YECSECGKTFIQKSTLIKHQRTH, and FVCDKCPKAFKSSYHLIRHEKTH. Positions 357-371 are enriched in basic and acidic residues; the sequence is PQCSEHGKASDEKPS. The tract at residues 357 to 377 is disordered; it reads PQCSEHGKASDEKPSPTKHWR. 7 consecutive C2H2-type zinc fingers follow at residues 385-407, 413-435, 441-463, 469-491, 497-519, 525-547, and 553-575; these read YECSKCGKSFRGKSHLSVHQRIH, YECSICGKTFSGKSHLSVHHRTH, YECRRCGKAFGEKSTLIVHQRMH, YKCNECGKAFSEKSPLIKHQRIH, YECTDCKKAFSRKSTLIKHQRIH, YKCSECGKAFSVKSTLIVHHRTH, and YECRDCGKAFSGKSTLIKHQRSH.

It belongs to the krueppel C2H2-type zinc-finger protein family. Expressed in testis.

Its subcellular location is the nucleus. Functionally, may be involved in transcriptional regulation. This Homo sapiens (Human) protein is Zinc finger protein 674 (ZNF674).